The chain runs to 543 residues: CTP synthase (543 aa).

Residues Met1–Ile265 form an amidoligase domain region. Ser13 contributes to the CTP binding site. Ser13 serves as a coordination point for UTP. Position 14 to 19 (Ser14 to Leu19) interacts with ATP. Tyr54 lines the L-glutamine pocket. Asp71 provides a ligand contact to ATP. Mg(2+)-binding residues include Asp71 and Glu139. CTP is bound by residues Asp146–Glu148, Lys186–Gln191, and Lys222. UTP contacts are provided by residues Lys186–Gln191 and Lys222. Arg238–Ala240 contacts ATP. The Glutamine amidotransferase type-1 domain maps to Thr291–Leu542. L-glutamine is bound at residue Gly353. Cys380 functions as the Nucleophile; for glutamine hydrolysis in the catalytic mechanism. L-glutamine contacts are provided by residues Phe381–Gln384, Glu404, and Arg470. Active-site residues include His515 and Glu517.

This sequence belongs to the CTP synthase family. Homotetramer.

It catalyses the reaction UTP + L-glutamine + ATP + H2O = CTP + L-glutamate + ADP + phosphate + 2 H(+). The catalysed reaction is L-glutamine + H2O = L-glutamate + NH4(+). The enzyme catalyses UTP + NH4(+) + ATP = CTP + ADP + phosphate + 2 H(+). It participates in pyrimidine metabolism; CTP biosynthesis via de novo pathway; CTP from UDP: step 2/2. Allosterically activated by GTP, when glutamine is the substrate; GTP has no effect on the reaction when ammonia is the substrate. The allosteric effector GTP functions by stabilizing the protein conformation that binds the tetrahedral intermediate(s) formed during glutamine hydrolysis. Inhibited by the product CTP, via allosteric rather than competitive inhibition. In terms of biological role, catalyzes the ATP-dependent amination of UTP to CTP with either L-glutamine or ammonia as the source of nitrogen. Regulates intracellular CTP levels through interactions with the four ribonucleotide triphosphates. This chain is CTP synthase, found in Rhodopseudomonas palustris (strain ATCC BAA-98 / CGA009).